Consider the following 224-residue polypeptide: N-(5'-phosphoribosyl)anthranilate isomerase (224 aa).

This sequence belongs to the TrpF family.

It carries out the reaction N-(5-phospho-beta-D-ribosyl)anthranilate = 1-(2-carboxyphenylamino)-1-deoxy-D-ribulose 5-phosphate. It functions in the pathway amino-acid biosynthesis; L-tryptophan biosynthesis; L-tryptophan from chorismate: step 3/5. This chain is N-(5'-phosphoribosyl)anthranilate isomerase, found in Allorhizobium ampelinum (strain ATCC BAA-846 / DSM 112012 / S4) (Agrobacterium vitis (strain S4)).